The chain runs to 115 residues: Large ribosomal subunit protein bL19 (115 aa).

The protein belongs to the bacterial ribosomal protein bL19 family.

Its function is as follows. This protein is located at the 30S-50S ribosomal subunit interface and may play a role in the structure and function of the aminoacyl-tRNA binding site. The protein is Large ribosomal subunit protein bL19 of Tropheryma whipplei (strain TW08/27) (Whipple's bacillus).